The sequence spans 273 residues: 4-hydroxy-tetrahydrodipicolinate reductase (273 aa).

NAD(+) contacts are provided by residues Gly12 to Met17 and Glu38. An NADP(+)-binding site is contributed by Arg39. NAD(+) is bound by residues Gly102–Thr104 and Ala126–Phe129. His159 acts as the Proton donor/acceptor in catalysis. A (S)-2,3,4,5-tetrahydrodipicolinate-binding site is contributed by His160. Residue Lys163 is the Proton donor of the active site. Gly169–Thr170 lines the (S)-2,3,4,5-tetrahydrodipicolinate pocket.

The protein belongs to the DapB family. As to quaternary structure, homotetramer.

It localises to the cytoplasm. The catalysed reaction is (S)-2,3,4,5-tetrahydrodipicolinate + NAD(+) + H2O = (2S,4S)-4-hydroxy-2,3,4,5-tetrahydrodipicolinate + NADH + H(+). It catalyses the reaction (S)-2,3,4,5-tetrahydrodipicolinate + NADP(+) + H2O = (2S,4S)-4-hydroxy-2,3,4,5-tetrahydrodipicolinate + NADPH + H(+). The protein operates within amino-acid biosynthesis; L-lysine biosynthesis via DAP pathway; (S)-tetrahydrodipicolinate from L-aspartate: step 4/4. Catalyzes the conversion of 4-hydroxy-tetrahydrodipicolinate (HTPA) to tetrahydrodipicolinate. This chain is 4-hydroxy-tetrahydrodipicolinate reductase, found in Escherichia fergusonii (strain ATCC 35469 / DSM 13698 / CCUG 18766 / IAM 14443 / JCM 21226 / LMG 7866 / NBRC 102419 / NCTC 12128 / CDC 0568-73).